Consider the following 79-residue polypeptide: M-myrmicitoxin(01)-Tb1a (79 aa).

The signal sequence occupies residues 1–26; it reads MKLSFLSLVLAIILVMALMYTPHAEA. A propeptide spanning residues 27-56 is cleaved from the precursor; sequence KAWADADADATAAADADADAVADALADAVA. At Val76 the chain carries Valine amide.

Belongs to the formicidae venom precursor-01 superfamily. Post-translationally, the C-terminal amidation is important for antimicrobial activity, since a non-amidated synthetic peptide shows a reduced antimicrobial activity (2-20-fold depending on the strain tested). The amidation may play a positive role in the peptide conformation, since amidated peptide shows an increase of about 5% of helical content. As to expression, expressed by the venom gland.

Its subcellular location is the secreted. The protein localises to the target cell membrane. Functionally, antimicrobial peptide that shows antimicrobial activities against all microorganisms tested with minimal inhibitory concentrations (MICs) values ranging from 0.45 to 97.5 umol/L. This peptide kills the microorganisms by permeabilizating the membranes. It shows a very weak hemolytic activity (HC(50)=325 umol/L) and weak cytotoxicity against human lymphocytes (LC(50)=67.8 umol/L). Gram-negative bacteria tested are E.coli (MIC=24.4 umol/L), C.sakazakii (MIC=5.8 umol/L), P.aeruginosa (MIC=8.7-12.2 umol/L), S.enterica (MIC=5.4 umol/L), and H.pylori (MIC=0.99-3.9 umol/L). Gram-positive bacteria tested are E.hirae (MIC=12.2 umol/L), S.aureus (MIC=3.0-6.4 umol/L), methicillin-resistant S.aureus (MRSA) (MIC=8.7 umol/L), S.xylosus (MIC=0.45-1.3 umol/L), and B.subtilis (MIC=24.4 umol/L). Fungi tested are A.niger (MIC=0.75 umol/L), C.albicans (MIC=17.3 umol/L), G.candidum (MIC=97.5 umol/L), and S.cerevisiae (MIC=6.1 umol/L). Finally the parasite tested is L.infantum (MIC=1.5 umol/L). The protein is M-myrmicitoxin(01)-Tb1a of Tetramorium bicarinatum (Tramp ant).